The following is a 145-amino-acid chain: Mannitol-specific phosphotransferase enzyme IIA component (145 aa).

One can recognise a PTS EIIA type-2 domain in the interval 4–144 (PILKKENIVL…EEILSILNEV (141 aa)). His64 serves as the catalytic Tele-phosphohistidine intermediate. At His64 the chain carries Phosphohistidine; by HPr.

The protein resides in the cytoplasm. In terms of biological role, the phosphoenolpyruvate-dependent sugar phosphotransferase system (sugar PTS), a major carbohydrate active transport system, catalyzes the phosphorylation of incoming sugar substrates concomitantly with their translocation across the cell membrane. The enzyme II CmtAB PTS system is involved in D-mannitol transport. The chain is Mannitol-specific phosphotransferase enzyme IIA component from Geobacillus stearothermophilus (Bacillus stearothermophilus).